A 411-amino-acid polypeptide reads, in one-letter code: Probable tRNA pseudouridine synthase D (411 aa).

The active-site Nucleophile is the Asp79. Residues 150–369 enclose the TRUD domain; the sequence is GFPNYFGQQR…STGDRRIVSA (220 aa).

It belongs to the pseudouridine synthase TruD family.

It carries out the reaction uridine(13) in tRNA = pseudouridine(13) in tRNA. Its function is as follows. Could be responsible for synthesis of pseudouridine from uracil-13 in transfer RNAs. The polypeptide is Probable tRNA pseudouridine synthase D (Thermoplasma acidophilum (strain ATCC 25905 / DSM 1728 / JCM 9062 / NBRC 15155 / AMRC-C165)).